The chain runs to 420 residues: Zinc finger protein 362 (420 aa).

Disordered regions lie at residues 1–28 (MSRS…WPPP), 54–80 (RPPH…ESSQ), and 115–155 (VTGL…SQSR). The span at 121–154 (STRTPSVSTSESSAGAGTGTGTSTPSTPTTTSQS) shows a compositional bias: low complexity. Residue threonine 162 is modified to Phosphothreonine. The disordered stretch occupies residues 178–202 (TIQGHGLLGPPKSERGRKKIKAENP). A Glycyl lysine isopeptide (Lys-Gly) (interchain with G-Cter in SUMO2) cross-link involves residue lysine 198. 6 consecutive C2H2-type zinc fingers follow at residues 227 to 249 (YRCK…SKSH), 255 to 277 (HKCP…LRIH), 283 to 305 (YHCS…TRIH), 311 to 335 (YKCP…QRQH), 341 to 363 (YKCP…LSAH), and 371 to 393 (YCCS…MSKH). A Phosphoserine modification is found at serine 404.

This sequence belongs to the krueppel C2H2-type zinc-finger protein family.

Its subcellular location is the nucleus. May be involved in transcriptional regulation. The chain is Zinc finger protein 362 (ZNF362) from Homo sapiens (Human).